We begin with the raw amino-acid sequence, 406 residues long: Probable endo-xylogalacturonan hydrolase A (406 aa).

Residues 1 to 18 form the signal peptide; sequence MLYPRNLALFSLLSLSSA. 4 PbH1 repeats span residues 183 to 213, 214 to 235, 237 to 257, and 299 to 320; these read TQHV…DIGA, STHV…AFKP, SNYV…SVGS, and VKNV…QIES. Catalysis depends on D228, which acts as the Proton donor. H251 is an active-site residue. A glycan (N-linked (GlcNAc...) asparagine) is linked at N301.

It belongs to the glycosyl hydrolase 28 family.

It is found in the secreted. In terms of biological role, pectinolytic enzyme involved in the degradation of xylogalacturonan (xga), a galacturonan backbone heavily substituted with xylose, and which is one important component of the hairy regions of pectin. Activity requires a galacturonic acid backbone substituted with xylose. The polypeptide is Probable endo-xylogalacturonan hydrolase A (xghA) (Aspergillus fumigatus (strain ATCC MYA-4609 / CBS 101355 / FGSC A1100 / Af293) (Neosartorya fumigata)).